We begin with the raw amino-acid sequence, 282 residues long: Phosphatidylglycerol--prolipoprotein diacylglyceryl transferase (282 aa).

Transmembrane regions (helical) follow at residues 18 to 38 (LSIK…YFIA), 55 to 75 (VIFY…VIFQ), and 89 to 109 (IWHG…TGII). A 1,2-diacyl-sn-glycero-3-phospho-(1'-sn-glycerol) is bound at residue Arg-137. 2 helical membrane passes run 203–223 (VGET…FVEG) and 235–255 (IRVA…ILIY).

It belongs to the Lgt family.

It is found in the cell membrane. The enzyme catalyses L-cysteinyl-[prolipoprotein] + a 1,2-diacyl-sn-glycero-3-phospho-(1'-sn-glycerol) = an S-1,2-diacyl-sn-glyceryl-L-cysteinyl-[prolipoprotein] + sn-glycerol 1-phosphate + H(+). It participates in protein modification; lipoprotein biosynthesis (diacylglyceryl transfer). Catalyzes the transfer of the diacylglyceryl group from phosphatidylglycerol to the sulfhydryl group of the N-terminal cysteine of a prolipoprotein, the first step in the formation of mature lipoproteins. This chain is Phosphatidylglycerol--prolipoprotein diacylglyceryl transferase, found in Staphylococcus haemolyticus (strain JCSC1435).